A 680-amino-acid polypeptide reads, in one-letter code: Probable oxidoreductase YoaE (680 aa).

One can recognise a 4Fe-4S Mo/W bis-MGD-type domain in the interval 9–66 (NGIFKSVCSLDCPDQCGLLIHKKDGKIVKVQGDPDHPVTAGNICNKVRNMTERIYDEK). [4Fe-4S] cluster-binding residues include C16, C20, C24, and C52.

This sequence belongs to the prokaryotic molybdopterin-containing oxidoreductase family. Mo-bis(molybdopterin guanine dinucleotide) serves as cofactor.

The sequence is that of Probable oxidoreductase YoaE (yoaE) from Bacillus subtilis (strain 168).